A 428-amino-acid chain; its full sequence is Enolase (428 aa).

Glutamine 163 provides a ligand contact to (2R)-2-phosphoglycerate. The Proton donor role is filled by glutamate 205. Mg(2+) contacts are provided by aspartate 242, glutamate 286, and aspartate 313. (2R)-2-phosphoglycerate-binding residues include lysine 338, arginine 367, serine 368, and lysine 389. Lysine 338 functions as the Proton acceptor in the catalytic mechanism.

Belongs to the enolase family. Mg(2+) is required as a cofactor.

It localises to the cytoplasm. It is found in the secreted. The protein resides in the cell surface. It catalyses the reaction (2R)-2-phosphoglycerate = phosphoenolpyruvate + H2O. It functions in the pathway carbohydrate degradation; glycolysis; pyruvate from D-glyceraldehyde 3-phosphate: step 4/5. In terms of biological role, catalyzes the reversible conversion of 2-phosphoglycerate (2-PG) into phosphoenolpyruvate (PEP). It is essential for the degradation of carbohydrates via glycolysis. The chain is Enolase from Lactobacillus helveticus (strain DPC 4571).